A 113-amino-acid chain; its full sequence is uncharacterized protein (113 aa).

It belongs to the ycf68 family.

It is found in the plastid. It localises to the chloroplast. This is an uncharacterized protein from Eucalyptus globulus subsp. globulus (Tasmanian blue gum).